A 630-amino-acid chain; its full sequence is tRNA uridine 5-carboxymethylaminomethyl modification enzyme MnmG (630 aa).

Residue 13–18 (GGGHAG) coordinates FAD. 273 to 287 (GPRYCPSIEDKVMRF) lines the NAD(+) pocket.

It belongs to the MnmG family. As to quaternary structure, homodimer. Heterotetramer of two MnmE and two MnmG subunits. It depends on FAD as a cofactor.

It is found in the cytoplasm. In terms of biological role, NAD-binding protein involved in the addition of a carboxymethylaminomethyl (cmnm) group at the wobble position (U34) of certain tRNAs, forming tRNA-cmnm(5)s(2)U34. In Actinobacillus pleuropneumoniae serotype 3 (strain JL03), this protein is tRNA uridine 5-carboxymethylaminomethyl modification enzyme MnmG.